The primary structure comprises 627 residues: 1-deoxy-D-xylulose-5-phosphate synthase (627 aa).

Thiamine diphosphate-binding positions include histidine 76 and 117–119 (SHA). Aspartate 148 contacts Mg(2+). Thiamine diphosphate contacts are provided by residues 149–150 (GA), asparagine 178, phenylalanine 288, and glutamate 370. Position 178 (asparagine 178) interacts with Mg(2+).

Belongs to the transketolase family. DXPS subfamily. In terms of assembly, homodimer. Mg(2+) is required as a cofactor. The cofactor is thiamine diphosphate.

The enzyme catalyses D-glyceraldehyde 3-phosphate + pyruvate + H(+) = 1-deoxy-D-xylulose 5-phosphate + CO2. The protein operates within metabolic intermediate biosynthesis; 1-deoxy-D-xylulose 5-phosphate biosynthesis; 1-deoxy-D-xylulose 5-phosphate from D-glyceraldehyde 3-phosphate and pyruvate: step 1/1. In terms of biological role, catalyzes the acyloin condensation reaction between C atoms 2 and 3 of pyruvate and glyceraldehyde 3-phosphate to yield 1-deoxy-D-xylulose-5-phosphate (DXP). This is 1-deoxy-D-xylulose-5-phosphate synthase from Cutibacterium acnes (strain DSM 16379 / KPA171202) (Propionibacterium acnes).